The chain runs to 287 residues: Lectin 10 (287 aa).

Residues 1–11 lie on the Cytoplasmic side of the membrane; that stretch reads MALSNLKSNRT. Residues 12–31 form a helical membrane-spanning segment; that stretch reads LSSSLITIFIISLFLQYHNI. Topologically, residues 32 to 287 are extracellular; that stretch reads KSQSSWQSRQ…IINWSFESAL (256 aa). N-linked (GlcNAc...) asparagine glycosylation is found at N124, N147, N243, and N280.

The protein belongs to the leguminous lectin family.

It localises to the membrane. Functionally, may be involved in arbuscular mycorrhizal (AM) symbiosis with AM fungi. The chain is Lectin 10 from Medicago truncatula (Barrel medic).